A 454-amino-acid polypeptide reads, in one-letter code: Zinc finger CCCH domain-containing protein 66 (454 aa).

Gly residues predominate over residues 1-23; it reads MAAGAGAGGGGGEGDSNGGGTSP. Residues 1-30 are disordered; sequence MAAGAGAGGGGGEGDSNGGGTSPGGVSAAA. C3H1-type zinc fingers lie at residues 66–94, 111–139, 157–185, 318–346, and 364–392; these read RIGE…HPPN, RVGQ…HPRE, RPNE…HPQP, RPDQ…HPKE, and RPGE…HPMG. Residues 405-454 form a disordered region; it reads DVSSMHYQLSPSPGHPGILLDGGSGRSHRVPQSDSQQIPSGDGNAEREAS. Positions 434 to 443 are enriched in polar residues; that stretch reads VPQSDSQQIP.

The sequence is that of Zinc finger CCCH domain-containing protein 66 from Oryza sativa subsp. japonica (Rice).